Here is a 484-residue protein sequence, read N- to C-terminus: BAHD acyltransferase DCR (484 aa).

The Proton acceptor role is filled by histidine 168. The interval 211-233 (LDLTAPKDPNETSNGEDAANPTV) is disordered. Aspartate 394 acts as the Proton acceptor in catalysis. Positions 452–484 (EEEEDDGKKLTNGNGHVNGNGNGYVNGNGNGFV) are disordered. Residues 467 to 484 (HVNGNGNGYVNGNGNGFV) show a composition bias toward gly residues.

The protein belongs to the plant acyltransferase family. As to expression, expressed in root caps and lateral root emerging sites, in trichomes, in epidermis in stems, sepals and anther filaments, and in pollen grains and torpedo stage seeds.

The protein localises to the cytoplasm. The protein resides in the cytosol. Functionally, required for incorporation of 9(10),16-dihydroxy-hexadecanoic acid into cutin. The chain is BAHD acyltransferase DCR (DCR) from Arabidopsis thaliana (Mouse-ear cress).